The primary structure comprises 120 residues: Dynein 11 kDa light chain, flagellar outer arm (120 aa).

Belongs to the dynein light chain family. Consists of at least 3 heavy chains (alpha, beta and gamma), 2 intermediate chains and 8 light chains.

The protein localises to the cytoplasm. It is found in the cytoskeleton. It localises to the flagellum axoneme. This chain is Dynein 11 kDa light chain, flagellar outer arm, found in Chlamydomonas reinhardtii (Chlamydomonas smithii).